A 913-amino-acid chain; its full sequence is Sterol uptake control protein 2 (913 aa).

The segment at residues 50–80 (GCDNCKRRRVKCDEGKPACRKCTNMKLECQY) is a DNA-binding region (zn(2)-C6 fungal-type). Disordered regions lie at residues 103-173 (GSVE…SMGL) and 216-258 (GNMG…LAGS). The residue at position 122 (threonine 122) is a Phosphothreonine. Positions 150–164 (SESEEKSSAPIEDKN) are enriched in basic and acidic residues. The segment covering 222–241 (QLQQQQQVQQQSQPQTQAQQ) has biased composition (low complexity). Positions 303–346 (QQHQQVQLQQYQQLRQEQHQQVQQQQQEQLQQYQQHFLQQQQQV) form a coiled coil. Disordered regions lie at residues 347–385 (LLQQEQQPNDEEGGVQEENSKKVKEGPLQSQTSETTLNS) and 453–489 (MQEHHERAAASVKENDGQLSDTKSPAPSNNAQGGSAS). Residues 374-385 (LQSQTSETTLNS) are compositionally biased toward polar residues. Positions 440 to 472 (ATKASNAEEALANMQEHHERAAASVKENDGQLS) form a coiled coil. The span at 454 to 468 (QEHHERAAASVKEND) shows a compositional bias: basic and acidic residues. The span at 469–487 (GQLSDTKSPAPSNNAQGGS) shows a compositional bias: polar residues. At serine 519 the chain carries Phosphoserine. The segment covering 552 to 562 (EPTISLQTSQT) has biased composition (polar residues). The disordered stretch occupies residues 552–571 (EPTISLQTSQTENEDDASRQ).

The protein resides in the nucleus. Functionally, transcription factor that is involved in activation of anaerobic genes such as DAN/TIR cell wall mannoprotein genes and YML083c. Appears to bind to anaerobic response elements (AR1) with the consensus sequence 5'-TCGTTYAG-3' present in the promoter regions of DAN/TIR genes. Involved in sterol uptake and regulation of the sterol biosynthesis. Binds to sterol regulatory elements (SRE) with the consensus sequence 5'-TCGTATA-3' present in ERG2 and ERG3 promoters. May be involved in down-regulation of CWP2 during anaerobic adaptation. This Saccharomyces cerevisiae (strain ATCC 204508 / S288c) (Baker's yeast) protein is Sterol uptake control protein 2 (UPC2).